Consider the following 258-residue polypeptide: Tegument protein VP22 (258 aa).

Residues 66–143 (VQPAARGRDR…RAPPGANAVA (78 aa)) form a disordered region. Over residues 77-118 (AAAGTTVAAPAAAPARRSSSRASSRPPRAAADPPVLRPATRG) the composition is skewed to low complexity. Residues 131–134 (PRPR) carry the Nuclear localization signal motif. The Nuclear export signal motif lies at 204 to 216 (LDRMLKSAAIRIL). The tract at residues 234–258 (RAQRPAARGSTSGGESRLRGERARP) is disordered. Basic and acidic residues predominate over residues 249-258 (SRLRGERARP).

Belongs to the alphaherpesvirinae VP22 tegument protein family. As to quaternary structure, interacts with gE (via C-terminus); this interaction is necessary for the recruitment of VP22 to the Golgi and its packaging into virions. Interacts with gM (via C-terminus). Interacts with VP16; this interaction allows the formation of a tripartite complex composed of VP16, VP22 and UL41/VHS. Interacts with the capsid-binding protein UL16. Interacts with host CGAS. In terms of processing, highly phosphorylated in the host cell. Packaging is selective for underphosphorylated forms.

The protein localises to the virion tegument. Its subcellular location is the host cytoplasm. It is found in the host nucleus. It localises to the host Golgi apparatus. In terms of biological role, tegument protein that plays different roles during the time course of infection. Participates in both the accumulation of viral mRNAs and viral protein translation at late time of infection. Modulates the RNase activity of the virion host shutoff protein UL41 probably to ensure necessary levels of key cellular mRNAs and proteins. Plays a role in microtubule reorganization that occurs after viral infection by stabilizing microtubule network. Plays a role in the inhibition of host innate immune system by targeting the CGAS enzymatic activity which is the principal cytosolic DNA sensor that detects invading viral DNA. Acts by mediating disruption of liquid-like droplets in which CGAS is activated, thereby preventing CGAS activity. This chain is Tegument protein VP22, found in Bovine herpesvirus 1.1 (strain Cooper) (BoHV-1).